Reading from the N-terminus, the 180-residue chain is Flavodoxin B (180 aa).

Residues 4-173 (IGLFFGSNTG…RVAAWLAQIA (170 aa)) form the Flavodoxin-like domain.

This sequence belongs to the flavodoxin family. FMN is required as a cofactor.

Its function is as follows. Low-potential electron donor to a number of redox enzymes. NifF is the electron donor to nitrogenase. The chain is Flavodoxin B (nifF) from Azotobacter chroococcum mcd 1.